The primary structure comprises 599 residues: MRTHYCGQLNAALDGQIVTLCGWAHRRRDHGGVIFIDLRDREGLAQVVCDPDRADTFKIAESVRNEFCLKITGKVRPRPAGTTNANLASGEIEILCHEIEVLNPSVTPPFQLDEDNLSENVRLLHRVIDLRRPQMQNNLMLRYKTSRAFRRFLDDNGFIDIETPMLTKSTPEGARDYLVPSRVHPGQFFALPQSPQLFKQLLMVAGYDRYYQIVKCFRDEDLRADRQPEFTQVDIETSFMSEAEIMALTEKLIRTVFKEAIDVDLPDFPRMTYAEAMHRFGSDKPDLRVTLELTEVTDAFKDVAFKVFAGVANSEGGRIAAMRIPGGATLTRGEIDAYTQFVGIYGAKGLAYIKVNDASQINETGLQSPIVKNLSEASLKAVIERTGAQSGDLIFFGADKAKIVNDALGALRIKIGHEKGFVTGAKWAPLWVIDFPMFEYDDESKRWTACHHPFTSPKDEHLDLLVSDPGKCLAKAYDLALNGWELGGGSVRIHRSDVQEKVFSALNIGPEEQQAKFGFLLDALKYGAPPHGGLAFGLDRIVTMMTGAESIRDVIAFPKTQRAQCLLTDAPSGVDEKQLRELHIRLRQKVETQVEVGQP.

Glutamate 172 provides a ligand contact to L-aspartate. The interval 196 to 199 (QLFK) is aspartate. Arginine 218 contributes to the L-aspartate binding site. Residues 218–220 (RDE) and glutamine 227 each bind ATP. L-aspartate is bound at residue histidine 451. Glutamate 485 serves as a coordination point for ATP. Arginine 492 is an L-aspartate binding site. 537–540 (GLDR) serves as a coordination point for ATP.

Belongs to the class-II aminoacyl-tRNA synthetase family. Type 1 subfamily. As to quaternary structure, homodimer.

It is found in the cytoplasm. It carries out the reaction tRNA(Asx) + L-aspartate + ATP = L-aspartyl-tRNA(Asx) + AMP + diphosphate. In terms of biological role, aspartyl-tRNA synthetase with relaxed tRNA specificity since it is able to aspartylate not only its cognate tRNA(Asp) but also tRNA(Asn). Reaction proceeds in two steps: L-aspartate is first activated by ATP to form Asp-AMP and then transferred to the acceptor end of tRNA(Asp/Asn). The chain is Aspartate--tRNA(Asp/Asn) ligase from Dechloromonas aromatica (strain RCB).